Consider the following 98-residue polypeptide: Plastocyanin (98 aa).

A Plastocyanin-like domain is found at 1-98 (AQIVKLGGDD…AGMKMTITVQ (98 aa)). Residues H38, C83, H86, and M91 each coordinate Cu(2+).

It belongs to the plastocyanin family. Requires Cu(2+) as cofactor.

It is found in the plastid. Its subcellular location is the chloroplast thylakoid membrane. Its function is as follows. Participates in electron transfer between P700 and the cytochrome b6-f complex in photosystem I. Has antiviral activity against Potato virus Y (strain N). The sequence is that of Plastocyanin (PETE) from Ulva pertusa (Sea lettuce).